A 397-amino-acid chain; its full sequence is Chorismate synthase (397 aa).

Positions 40 and 46 each coordinate NADP(+). FMN is bound by residues 129-131, 257-258, Gly-302, 317-321, and Arg-343; these read RSS, QA, and KPISS.

It belongs to the chorismate synthase family. As to quaternary structure, homotetramer. Requires FMNH2 as cofactor.

It catalyses the reaction 5-O-(1-carboxyvinyl)-3-phosphoshikimate = chorismate + phosphate. It participates in metabolic intermediate biosynthesis; chorismate biosynthesis; chorismate from D-erythrose 4-phosphate and phosphoenolpyruvate: step 7/7. In terms of biological role, catalyzes the anti-1,4-elimination of the C-3 phosphate and the C-6 proR hydrogen from 5-enolpyruvylshikimate-3-phosphate (EPSP) to yield chorismate, which is the branch point compound that serves as the starting substrate for the three terminal pathways of aromatic amino acid biosynthesis. This reaction introduces a second double bond into the aromatic ring system. This is Chorismate synthase from Chlorobium luteolum (strain DSM 273 / BCRC 81028 / 2530) (Pelodictyon luteolum).